Consider the following 327-residue polypeptide: PDZ and LIM domain protein 1 (327 aa).

Residue Thr2 is modified to N-acetylthreonine. In terms of domain architecture, PDZ spans 3–85 (TQQIVLQGPG…NMTLTVSRSE (83 aa)). Residues Ser90 and Ser130 each carry the phosphoserine modification. Phosphotyrosine is present on Tyr142. Positions 161–186 (VESKTSASGEEANSRPSAQPHPSGGL) are disordered. One can recognise an LIM zinc-binding domain in the interval 256–315 (PICDKCGTGIVGVFVKLRDHHRHPECYVCTDCGINLKQKGHFFVGDQIYCEKHARERVTP). 8 residues coordinate Zn(2+): Cys258, Cys261, His278, Cys281, Cys284, Cys287, Cys305, and His308. At Thr314 the chain carries Phosphothreonine. Tyr319 carries the phosphotyrosine modification.

Interacts with ACTN1. Interacts with ACTN2 and ACTN4. Interacts with PDLIM4. As to expression, expressed most abundantly in heart, lung and liver, moderately in spleen and skeletal muscle, and at extremely low levels (if at all) in testis and brain tissues.

It is found in the cytoplasm. It localises to the cytoskeleton. The protein resides in the myofibril. The protein localises to the sarcomere. Its subcellular location is the z line. In terms of biological role, cytoskeletal protein that may act as an adapter that brings other proteins (like kinases) to the cytoskeleton. Involved in assembly, disassembly and directioning of stress fibers in fibroblasts. Required for the localization of ACTN1 and PALLD to stress fibers. Required for cell migration and in maintaining cell polarity of fibroblasts. The polypeptide is PDZ and LIM domain protein 1 (Pdlim1) (Rattus norvegicus (Rat)).